The sequence spans 575 residues: Lysine--tRNA ligase (575 aa).

Positions 412 and 419 each coordinate Mg(2+).

The protein belongs to the class-II aminoacyl-tRNA synthetase family. In terms of assembly, homodimer. Mg(2+) is required as a cofactor.

It is found in the cytoplasm. The catalysed reaction is tRNA(Lys) + L-lysine + ATP = L-lysyl-tRNA(Lys) + AMP + diphosphate. In Bacteroides fragilis (strain YCH46), this protein is Lysine--tRNA ligase.